Reading from the N-terminus, the 263-residue chain is Glycerol uptake facilitator protein (263 aa).

Residues 1–7 (MNIYRKK) are Cytoplasmic-facing. The helical transmembrane segment at 8 to 36 (NIIKKCFMEFFGTGLVMFFGIGCLAASKL) threads the bilayer. At 37-41 (TNANF) the chain is on the extracellular side. Residues 42 to 62 (TQFEISCIWGFGVSIAIYFSS) form a helical membrane-spanning segment. Over 63–65 (SIS) the chain is Cytoplasmic. The stretch at 66 to 69 (GAHL) is an intramembrane region. The NPA 1 signature appears at 70 to 72 (NPA). An intramembrane region (helical) is located at residues 70–80 (NPAVTIFFWLS). Residues 81 to 86 (SKLNKR) are Cytoplasmic-facing. Residues 87 to 110 (KVLPYIISQTLGSFFFTMLTYYLY) form a helical membrane-spanning segment. The Extracellular segment spans residues 111-145 (NNLLISFERNNNVVRGTQESLNLASIFCVYPNYNN). The chain crosses the membrane as a helical span at residues 146–171 (SFIYDFIIEIFSTALFILIVLEFNNR). The Cytoplasmic portion of the chain corresponds to 172 to 181 (NSNYFLYNRS). Residues 182-198 (VAPILTGFLVCMINLVI) traverse the membrane as a helical segment. Residues 199–202 (NPLN) lie on the Extracellular side of the membrane. An intramembrane segment occupies 203 to 206 (NISL). Positions 207 to 209 (NPA) match the NPA 2 motif. The helical intramembrane region spans 207 to 220 (NPARDLGPKILLSL). The Extracellular segment spans residues 221-236 (TGWGLFSFTGGNDNIL). The helical transmembrane segment at 237–259 (YCFIPIMGPILGANLGGWIHKTL) threads the bilayer. Residues 260–263 (INNS) are Cytoplasmic-facing.

This sequence belongs to the MIP/aquaporin (TC 1.A.8) family.

Its subcellular location is the cell membrane. It carries out the reaction glycerol(in) = glycerol(out). Functionally, mediates glycerol diffusion across the cytoplasmic membrane via a pore-type mechanism. The chain is Glycerol uptake facilitator protein (glpF) from Buchnera aphidicola subsp. Acyrthosiphon pisum (strain APS) (Acyrthosiphon pisum symbiotic bacterium).